Here is a 1034-residue protein sequence, read N- to C-terminus: Teashirt homolog 2 (1034 aa).

The interval methionine 1 to aspartate 90 is disordered. A coiled-coil region spans residues alanine 13–serine 38. The segment covering leucine 21 to serine 36 has biased composition (acidic residues). A compositionally biased stretch (polar residues) spans serine 65 to aspartate 90. Lysine 188 participates in a covalent cross-link: Glycyl lysine isopeptide (Lys-Gly) (interchain with G-Cter in SUMO2). C2H2-type zinc fingers lie at residues phenylalanine 215 to histidine 239 and leucine 275 to histidine 299. The disordered stretch occupies residues histidine 239–aspartate 265. Glycyl lysine isopeptide (Lys-Gly) (interchain with G-Cter in SUMO2) cross-links involve residues lysine 306 and lysine 315. The C2H2-type 3; atypical zinc-finger motif lies at leucine 380–histidine 404. Lysine 417 is covalently cross-linked (Glycyl lysine isopeptide (Lys-Gly) (interchain with G-Cter in SUMO2)). Over residues leucine 432–alanine 455 the composition is skewed to polar residues. The segment at leucine 432–isoleucine 496 is disordered. A compositionally biased stretch (basic and acidic residues) spans glutamate 459–glutamate 482. Glycyl lysine isopeptide (Lys-Gly) (interchain with G-Cter in SUMO2) cross-links involve residues lysine 461, lysine 480, lysine 497, lysine 601, and lysine 652. Disordered stretches follow at residues threonine 598 to leucine 676 and glutamine 763 to lysine 789. Positions valine 600 to glutamine 668 are enriched in basic and acidic residues. Residues lysine 800 and lysine 820 each participate in a glycyl lysine isopeptide (Lys-Gly) (interchain with G-Cter in SUMO2) cross-link. The homeobox; atypical DNA-binding region spans arginine 841 to glycine 911. The segment at phenylalanine 926 to histidine 948 adopts a C2H2-type 4 zinc-finger fold. Lysine 966 participates in a covalent cross-link: Glycyl lysine isopeptide (Lys-Gly) (interchain with G-Cter in SUMO2). Serine 980 bears the Phosphoserine mark. The segment at phenylalanine 994–histidine 1017 adopts a C2H2-type 5 zinc-finger fold. The disordered stretch occupies residues serine 1014 to glutamate 1034.

This sequence belongs to the teashirt C2H2-type zinc-finger protein family. As to quaternary structure, interacts (via homeobox domain) with APBB1 (via PID domain 1). In terms of processing, sumoylated. As to expression, expressed in brain; strongly reduced in post-mortem elderly subjects with Alzheimer disease.

Its subcellular location is the nucleus. In terms of biological role, probable transcriptional regulator involved in developmental processes. May act as a transcriptional repressor (Potential). This is Teashirt homolog 2 (TSHZ2) from Homo sapiens (Human).